The sequence spans 462 residues: Chitinase-like mite allergen Der f 18.0101 (462 aa).

An N-terminal signal peptide occupies residues Met1–Ala25. Residues Pro29–Gly378 enclose the GH18 domain. Cys33 and Cys58 are disulfide-bonded. An N-linked (GlcNAc...) asparagine glycan is attached at Asn338. In terms of domain architecture, Chitin-binding type-2 spans Val404–Cys462. A disulfide bond links Cys439 and Cys453.

This sequence belongs to the glycosyl hydrolase 18 family. Chitinase class II subfamily. As to expression, expressed in the upper digestive tract. Staining is observed in the ventriculus, and in very rare individuals, also in the intestine or esophagus. No expression in fecal pellets neither inside the rectum nor defecated outside of the body.

It localises to the secreted. In terms of biological role, probably a non-catalytic chitinase-like protein, which binds to insoluble chitin and enhances the activity of the catalytic chitinases. Has weak chitin-binding activity. The sequence is that of Chitinase-like mite allergen Der f 18.0101 from Dermatophagoides farinae (American house dust mite).